The following is a 151-amino-acid chain: 3-hydroxyacyl-[acyl-carrier-protein] dehydratase FabZ (151 aa).

The active site involves H49.

Belongs to the thioester dehydratase family. FabZ subfamily.

The protein resides in the cytoplasm. It carries out the reaction a (3R)-hydroxyacyl-[ACP] = a (2E)-enoyl-[ACP] + H2O. Involved in unsaturated fatty acids biosynthesis. Catalyzes the dehydration of short chain beta-hydroxyacyl-ACPs and long chain saturated and unsaturated beta-hydroxyacyl-ACPs. The chain is 3-hydroxyacyl-[acyl-carrier-protein] dehydratase FabZ from Bordetella petrii (strain ATCC BAA-461 / DSM 12804 / CCUG 43448).